Consider the following 529-residue polypeptide: MSSGLIYISLEVLVACLITALIMYYVMKKIYYARGQAALKSASAKAKLMEFQAKSFVEAEEVRMKSQECKLQQQYENKNLQLKTHFEKKEVHLKHLEAQHKEFVRDEKRYLEKEKKELEKERQILEQEKENFKKQRVVCKEAQAKALDAMLNYMAYTKDEIKNMILEQLEEELEAQKSALIRRYEKEAKEEGKKKSYAILAEATARFAGNYATENLTTRIALPCSDYIGRVIGKDGKNIEAFKKVSGVDIEFSEDSSELCLSSFNLYRREVASETLKILIEDGRIQPNRIEEVYHRVARNLEKELLSEGESVVLELELGAMEDELKILIGKMRYRSSFGQNALQHSKEVALLAGLIAEQLGGDKKLARRAGILHDIGKALTQELGRDHVNLGVEVCKRHKEDPVVINAIYAHHGHEEILSVECASVCAADALSAGRPGARRKSDEEYAKRMQALEEIALEFDGVEKAYAMESGRELRVIVKSNQVRDNQVPIIARKIAKKIEESAQYVGEVGVQVVRENRFKTTATLKQ.

Residues glycine 4–tyrosine 24 traverse the membrane as a helical segment. A KH domain is found at leucine 216–valine 297. Positions alanine 342–glycine 435 constitute an HD domain.

It belongs to the RNase Y family.

It localises to the cell membrane. Functionally, endoribonuclease that initiates mRNA decay. The polypeptide is Ribonuclease Y (Helicobacter pylori (strain HPAG1)).